The primary structure comprises 142 residues: Large ribosomal subunit protein uL16 (142 aa).

It belongs to the universal ribosomal protein uL16 family. Part of the 50S ribosomal subunit.

In terms of biological role, binds 23S rRNA and is also seen to make contacts with the A and possibly P site tRNAs. The sequence is that of Large ribosomal subunit protein uL16 from Thermotoga sp. (strain RQ2).